The chain runs to 272 residues: Homeobox protein SIX3 (272 aa).

Residues 169–228 (GEQKTHCFKERTRGLLREWYLQDPYPNPGKKRELAHATGLTPTQVGNWFKNRRQRDRAAA) constitute a DNA-binding region (homeobox). The tract at residues 244–272 (CTLSGGDSSERADGDTFLSVTDSDSDLDV) is disordered.

It belongs to the SIX/Sine oculis homeobox family. As to quaternary structure, interacts with GMNN.

The protein localises to the nucleus. Transcriptional regulator which can act as both a transcriptional repressor and activator by binding a ATTA homeodomain core recognition sequence on these target genes. During forebrain development represses WNT1 expression allowing zona limitans intrathalamica formation and thereby ensuring proper anterio-posterior patterning of the diencephalon and formation of the rostral diencephalon. Acts as a direct upstream activator of SHH expression in the rostral diencephalon ventral midline and that in turn SHH maintains its expression. In addition, Six3 activity is required for the formation of the telencephalon. During postnatal stages of brain development is necessary for ependymal cell maturation by promoting the maturation of radial glia into ependymal cells through regulation of neuroblast proliferation and migration. Acts on the proliferation and differentiation of neural progenitor cells through activating transcription of CCND1 and CCND2. During early lens formation plays a role in lens induction and specification by activating directly PAX6 in the presumptive lens ectoderm. In turn PAX6 activates SIX3 resulting in activation of PDGFRA and CCND1 promoting cell proliferation. Also is required for the neuroretina development by directly suppressing WNT8B expression in the anterior neural plate territory. Its action during retina development and lens morphogenesis is AES and TLE4-dependent manner. Furthermore, during eye development regulates several genes expression. Before and during early lens development represses the CRYGF promoter by binding a SIX repressor element. Directly activates RHO transcription, or cooperates with CRX or NRL. Six3 also functions in the formation of the proximodistal axis of the optic cup, and promotes the formation of optic vesicles-like structures. During pituitary development, acts in parallel or alternatively with HESX1 to control cell proliferation through Wnt/beta-catenin pathway. Plays a role in eye development by suppressing WNT1 expression and in dorsal-ventral patterning by repressing BMP signaling pathway. This Oryzias latipes (Japanese rice fish) protein is Homeobox protein SIX3 (six3).